A 288-amino-acid polypeptide reads, in one-letter code: tRNA pseudouridine synthase A (288 aa).

Asp-58 acts as the Nucleophile in catalysis. Tyr-124 is a substrate binding site.

The protein belongs to the tRNA pseudouridine synthase TruA family. As to quaternary structure, homodimer.

The catalysed reaction is uridine(38/39/40) in tRNA = pseudouridine(38/39/40) in tRNA. In terms of biological role, formation of pseudouridine at positions 38, 39 and 40 in the anticodon stem and loop of transfer RNAs. This is tRNA pseudouridine synthase A from Corynebacterium diphtheriae (strain ATCC 700971 / NCTC 13129 / Biotype gravis).